The primary structure comprises 507 residues: MKRALLSVSDKTGLVSFAKGLIDRGFELVSTGGTHRELAAAGIAVTSVEEVTGFPEMLDGRVKTLHPKIHAGILARRDDPDHMEALANHDIQPVDLVCVNLYPFAATIKRPDVTRAEAIEQIDIGGPSALRAAAKNSDSVWAVVDPADYEAVLTGLDQDDAHLRQKLAAKVFAITAAYDAQIVHYLDPEPFPEHFTPTYTKRQDLRYGENSHQQAAFYVEPDPNPTSLAAAKQLHGKELSYNNIKDADAALAMLREFSEPAVVAVKHMNPCGIGLGKTIEGAWDKAYAADPMSIFGGIIALNRPVDLATAEKMHKLFLEIIIAPAFDDDAYAVLAKKKNVRLLTINTADTPAELGTETTAIYGGLLIQTRDNQTETPADMTVVTTVKPTDEQLKALAFAQTVVKHVKSNAIVVAQADQTLGIGAGQMNRIGSVELALTQAQQNDNFAGAVMASDAFFPMDDCVDYAAKHDIKAIIQPGGSIRDKDSIEKANQYGIAMVTTGVRHFRH.

Residues 1–144 form the MGS-like domain; it reads MKRALLSVSD…KNSDSVWAVV (144 aa).

This sequence belongs to the PurH family.

It catalyses the reaction (6R)-10-formyltetrahydrofolate + 5-amino-1-(5-phospho-beta-D-ribosyl)imidazole-4-carboxamide = 5-formamido-1-(5-phospho-D-ribosyl)imidazole-4-carboxamide + (6S)-5,6,7,8-tetrahydrofolate. The catalysed reaction is IMP + H2O = 5-formamido-1-(5-phospho-D-ribosyl)imidazole-4-carboxamide. It functions in the pathway purine metabolism; IMP biosynthesis via de novo pathway; 5-formamido-1-(5-phospho-D-ribosyl)imidazole-4-carboxamide from 5-amino-1-(5-phospho-D-ribosyl)imidazole-4-carboxamide (10-formyl THF route): step 1/1. The protein operates within purine metabolism; IMP biosynthesis via de novo pathway; IMP from 5-formamido-1-(5-phospho-D-ribosyl)imidazole-4-carboxamide: step 1/1. The sequence is that of Bifunctional purine biosynthesis protein PurH from Lacticaseibacillus casei (strain BL23) (Lactobacillus casei).